A 395-amino-acid polypeptide reads, in one-letter code: Receptor-like cytoplasmic kinase 176 (395 aa).

Residues 1–45 are disordered; that stretch reads MGNCWGAKISSESPCRSASSPSGGTSKYASNSSVSAASVPPTPRS. Low complexity-rich tracts occupy residues 10–22 and 29–39; these read SSES…SSPS and ASNSSVSAASV. The Protein kinase domain maps to 70–355; it reads FRPDSVLGEG…EQVVAVLEQL (286 aa). ATP is bound by residues 76-84 and lysine 108; that span reads LGEGGFGSV. The active-site Proton acceptor is aspartate 205. The segment at 359-395 is disordered; the sequence is KETGANPQLQKKSSSKNAGSNGSKPSSKGKPANARLV. The segment covering 369 to 395 has biased composition (low complexity); it reads KKSSSKNAGSNGSKPSSKGKPANARLV.

This sequence belongs to the protein kinase superfamily. Ser/Thr protein kinase family. Interacts with CERK1.

It catalyses the reaction L-seryl-[protein] + ATP = O-phospho-L-seryl-[protein] + ADP + H(+). The enzyme catalyses L-threonyl-[protein] + ATP = O-phospho-L-threonyl-[protein] + ADP + H(+). In terms of biological role, functions downstream of CERK1 in the microbial peptidoglycans (PGNs) and fungal chitin signaling pathways that mediate innate immunity. Participates in the activation of defense genes during response to PGN and chitin. The protein is Receptor-like cytoplasmic kinase 176 of Oryza sativa subsp. japonica (Rice).